Reading from the N-terminus, the 228-residue chain is Homeobox-leucine zipper protein ATHB-53 (228 aa).

The interval 36–62 is disordered; the sequence is DGGEESKPVKRRRKRRSKGSSATNEED. The segment covering 44–53 has biased composition (basic residues); sequence VKRRRKRRSK. Residues 68–127 constitute a DNA-binding region (homeobox); that stretch reads GMLRKRKLTDEQVNMLEYSFGNEHKLESGRKEKIAGELGLDPRQVAVWFQNRRARWKNKK. Residues 128-156 are leucine-zipper; that stretch reads LEEEYAKLKNHHDNVVLGQCQLESQILKL.

Belongs to the HD-ZIP homeobox family. Class I subfamily. Expressed in root meristem, late flowers and siliques.

The protein localises to the nucleus. In terms of biological role, probable transcription factor that may play a regulatory role in auxin/cytokinin signaling during root development. In Arabidopsis thaliana (Mouse-ear cress), this protein is Homeobox-leucine zipper protein ATHB-53 (ATHB-53).